A 518-amino-acid chain; its full sequence is Cytokinin hydroxylase (518 aa).

The helical transmembrane segment at 1 to 21 (MLLTILKSLLVIFVTTILRVL) threads the bilayer. Cys464 is a binding site for heme.

Belongs to the cytochrome P450 family. Heme serves as cofactor. As to expression, expressed in roots and flowers.

The protein resides in the membrane. It carries out the reaction N(6)-(dimethylallyl)adenosine 5'-phosphate + NADPH + O2 + H(+) = 9-ribosyl-trans-zeatin 5'-phosphate + NADP(+) + H2O. It catalyses the reaction N(6)-(dimethylallyl)adenosine 5'-diphosphate + NADPH + O2 + H(+) = 9-ribosyl-trans-zeatin 5'-diphosphate + NADP(+) + H2O. The catalysed reaction is N(6)-(dimethylallyl)adenosine 5'-triphosphate + NADPH + O2 + H(+) = 9-ribosyl-trans-zeatin 5'-triphosphate + NADP(+) + H2O. In terms of biological role, cytokinin hydroxylase that catalyzes the biosynthesis of trans-zeatin via the isopentenyladenine riboside 5'-monophosphate (iPRMP)-dependent pathway. Can use isopentenyladenosine-5'-monophosphate, isopentenyladenosine-5'-diphosphate and isopentenyladenosine-5'-triphosphate as substrate. In Arabidopsis thaliana (Mouse-ear cress), this protein is Cytokinin hydroxylase (CYP735A1).